A 559-amino-acid chain; its full sequence is TBC1 domain family member 24 (559 aa).

Residues lysine 36, arginine 40, lysine 238, arginine 242, and 293–297 (RLFSR) contribute to the a 1,2-diacyl-sn-glycero-3-phospho-(1D-myo-inositol) site. Positions 47–262 (SHALRGKVYQ…KVRAGQPLES (216 aa)) constitute a Rab-GAP TBC domain. One can recognise a TLDc domain in the interval 343 to 554 (EIVSVREMRD…IAAVEAWGFQ (212 aa)). Residues serine 473 and serine 480 each carry the phosphoserine modification.

As to quaternary structure, interacts with ARF6. As to expression, highest expression in brain.

The protein localises to the cell membrane. Its subcellular location is the cytoplasm. The protein resides in the cytoplasmic vesicle membrane. It localises to the presynapse. Functionally, may act as a GTPase-activating protein for Rab family protein(s). Involved in neuronal projections development, probably through a negative modulation of ARF6 function. Involved in the regulation of synaptic vesicle trafficking. This Homo sapiens (Human) protein is TBC1 domain family member 24 (TBC1D24).